A 2188-amino-acid chain; its full sequence is Tiggrin (2188 aa).

The first 18 residues, 1–18 (MRALGGITLLLAVAICQG), serve as a signal peptide directing secretion. Coiled coils occupy residues 570-635 (SRLE…EHIK), 1009-1050 (LKNL…EIES), 1312-1343 (TFVE…EIEE), and 1613-1641 (KQQR…AQYH). The disordered stretch occupies residues 1984–2188 (IFSKDRGDQP…FWEKLKEKLG (205 aa)). Positions 1985–1998 (FSKDRGDQPPHTYD) are enriched in basic and acidic residues. The Cell attachment site signature appears at 1989–1991 (RGD). The segment covering 2000-2009 (SFVEGDEPGL) has biased composition (acidic residues). Positions 2016 to 2033 (PRPPNPAPIVSTPKPPLP) are enriched in pro residues. Low complexity-rich tracts occupy residues 2057 to 2077 (GSAS…ASAS) and 2091 to 2101 (QQEVDLGQQQQ). Over residues 2115–2139 (GQQTQVEDTDWNQQAEDLGQQQQVQ) the composition is skewed to polar residues. Low complexity predominate over residues 2148 to 2165 (QTQGHSSSSNSRSQPLQQ). The span at 2179–2188 (FWEKLKEKLG) shows a compositional bias: basic and acidic residues.

Post-translationally, O-glycosylation by pgant3 is required for proper secretion and localization to the basal cell layer interface during wing development. As to expression, in embryos, expressed in the apodemes (muscle attachment sites) of the major longitudinal muscles 4, 6, 7, 12 and 13 and the wide dorsal oblique muscles 9 and 10, in hemocytes, in fat body cells, in basement membranes surrounding the gut and in the commissures of the ventral nerve cord. Expressed in larval imaginal wing disk and in pupal wing. In adult flies, expressed in the jump muscle (at protein level).

The protein resides in the secreted. Its subcellular location is the extracellular space. It localises to the extracellular matrix. Its function is as follows. Functions as a ligand for integrin alpha-PS2/beta-PS. Required in larvae for proper muscle structure and function. Involved in the regulation of cell adhesion during wing development. This Drosophila melanogaster (Fruit fly) protein is Tiggrin.